Consider the following 2784-residue polypeptide: Cilia- and flagella-associated protein 46 (2784 aa).

A TPR 1 repeat occupies 129-162 (GLEVAAANQPRYQFLVYNASVHHWRVVAPLHRDG). The stretch at 242-268 (TAAAAKLTELQKDVARLQVHLATLAAA) forms a coiled coil. A TPR 2 repeat occupies 401–434 (SLAPVVVAAHVKALEQLEDVLTTFTKLADVEGIH). Disordered stretches follow at residues 543–562 (SAEP…RSKE) and 581–607 (RDLP…AAAR). Positions 585-595 (HPPPPAPTDPP) are enriched in pro residues. Positions 644–665 (AVDREMVLLQAQLAHYEAEAAI) form a coiled coil. The disordered stretch occupies residues 670–697 (RRRADISPPTRPSPPEVDGEGVRQPPAT). One copy of the TPR 3 repeat lies at 708–743 (ASVRSMRGAMSVNEPWLTLNNAVQLYNAALPLMQQH). 2 disordered regions span residues 799–837 (DAGQ…PAYK) and 929–954 (RVNE…KPHG). Residues 802–817 (QELEDDDDEDSLDEDG) show a composition bias toward acidic residues. The TPR 4 repeat unit spans residues 976–1009 (LELWAKMARAVADAGVWPAALECSAAALAALPGA). Residues 1275–1288 (TGDLDGDGTDDEDD) show a composition bias toward acidic residues. Disordered regions lie at residues 1275–1351 (TGDL…RVPE) and 1640–1673 (AAGG…HGQL). A compositionally biased stretch (gly residues) spans 1298–1311 (SGGGSSSGRAGGGF). Basic and acidic residues predominate over residues 1646 to 1658 (GGRESPSPHDDGI). TPR repeat units follow at residues 1712–1745 (HDVW…AADC) and 1854–1886 (MEML…LAAR). A coiled-coil region spans residues 1961-1984 (RLAEVQLAAAEERERLAGADREKA). Disordered regions lie at residues 2068-2112 (RPFV…EAAA), 2278-2303 (ATAE…PAAA), 2346-2389 (AAKG…PGAA), and 2441-2465 (LPLP…AGPT). Pro residues predominate over residues 2069–2083 (PFVPPPKPPGAPKRP). Residues 2087 to 2096 (AEEEEDEEGP) show a composition bias toward acidic residues. A compositionally biased stretch (low complexity) spans 2097–2112 (DTAAADAAAEAAEAAA). The span at 2378 to 2389 (SKQGPKSGPGAA) shows a compositional bias: low complexity. Over residues 2450 to 2461 (DGKKEKKDKKEA) the composition is skewed to basic and acidic residues. The TPR 7 repeat unit spans residues 2613–2646 (ATGGPCTGLLFLGVGRFAAHVPPAVLASAPLGGC).

The protein belongs to the CFAP46 family. In terms of assembly, part of the PDCP1 complex composed of CFAP46, CFAP54, CFAP74 and CFAP221; the PDCP1 complex binds calmodulin.

The protein resides in the cytoplasm. Its subcellular location is the cytoskeleton. It localises to the cilium axoneme. In terms of biological role, as part of the central apparatus of the cilium axoneme plays a role in cilium movement and thereby cell motility. This chain is Cilia- and flagella-associated protein 46, found in Chlamydomonas reinhardtii (Chlamydomonas smithii).